Consider the following 338-residue polypeptide: Putative peptide import ATP-binding protein BruAb2_0796 (338 aa).

Residues 7–263 (LDIEGLRTVF…PRHPYTMGLL (257 aa)) enclose the ABC transporter domain. Residue 43 to 50 (GESGSGKS) participates in ATP binding.

The protein belongs to the ABC transporter superfamily. The complex is composed of two ATP-binding proteins (BruAb2_0796 and BruAb2_0797), two transmembrane proteins (BruAb2_0794) and a solute-binding protein (BruAb2_0792).

It localises to the cell inner membrane. Its function is as follows. Probably part of an ABC transporter complex that could be involved in peptide import. Probably responsible for energy coupling to the transport system. This is Putative peptide import ATP-binding protein BruAb2_0796 from Brucella abortus biovar 1 (strain 9-941).